Consider the following 359-residue polypeptide: Insulin gene enhancer protein ISL-2 (359 aa).

LIM zinc-binding domains follow at residues 25-86 and 87-149; these read AMCV…RLFG and IKCA…LLER. Residues 151-190 form a disordered region; the sequence is AAGSPRSPGPLPGARGLHLPDAGSGRQPSLRTHVHKQAEK. S154 and S157 each carry phosphoserine. The segment at residues 191 to 250 is a DNA-binding region (homeobox); that stretch reads TTRVRTVLNEKQLHTLRTCYAANPRPDALMKEQLVEMTGLSPRVIRVWFQNKRCKDKKKS. Residues 272–301 form an LIM-binding domain (LID) region; that stretch reads GTPLVAGSPIRHENAVQGSAVEVQTYQPPW. Phosphoserine is present on S279. Over residues 326-336 the composition is skewed to low complexity; it reads ESGSLGNSSGS. The disordered stretch occupies residues 326 to 359; that stretch reads ESGSLGNSSGSDVTSLSSQLPDTPNSMVPSPVET. The span at 337 to 359 shows a compositional bias: polar residues; sequence DVTSLSSQLPDTPNSMVPSPVET.

In terms of assembly, interacts with LHX4.

The protein resides in the nucleus. Its function is as follows. Transcriptional factor that defines subclasses of motoneurons that segregate into columns in the spinal cord and select distinct axon pathways. The protein is Insulin gene enhancer protein ISL-2 (Isl2) of Mus musculus (Mouse).